We begin with the raw amino-acid sequence, 222 residues long: Ubiquitin-conjugating enzyme E2 S (222 aa).

M1 carries the post-translational modification N-acetylmethionine. Positions 11-157 (HIIRLVYKEV…ARLLTEIHGG (147 aa)) constitute a UBC core domain. The active-site Glycyl thioester intermediate is the C95. The tract at residues 156–222 (GGAGGPSGRA…TDKKRALRRL (67 aa)) is disordered. At S173 the chain carries Phosphoserine. Basic residues predominate over residues 208-222 (AAKKKTDKKRALRRL).

This sequence belongs to the ubiquitin-conjugating enzyme family. Component of the APC/C complex, composed of at least 14 distinct subunits that assemble into a complex of at least 19 chains with a combined molecular mass of around 1.2 MDa. Within this complex, directly interacts with ANAPC2 and ANAPC4. Interacts with CDC20, FZR1/CDH1 and VHL. Autoubiquitinated by the APC/C complex during G1, leading to its degradation by the proteasome.

The enzyme catalyses S-ubiquitinyl-[E1 ubiquitin-activating enzyme]-L-cysteine + [E2 ubiquitin-conjugating enzyme]-L-cysteine = [E1 ubiquitin-activating enzyme]-L-cysteine + S-ubiquitinyl-[E2 ubiquitin-conjugating enzyme]-L-cysteine.. It functions in the pathway protein modification; protein ubiquitination. Functionally, accepts ubiquitin from the E1 complex and catalyzes its covalent attachment to other proteins. Catalyzes 'Lys-11'-linked polyubiquitination. Acts as an essential factor of the anaphase promoting complex/cyclosome (APC/C), a cell cycle-regulated ubiquitin ligase that controls progression through mitosis. Acts by specifically elongating 'Lys-11'-linked polyubiquitin chains initiated by the E2 enzyme UBE2C/UBCH10 on APC/C substrates, enhancing the degradation of APC/C substrates by the proteasome and promoting mitotic exit. Also acts by elongating ubiquitin chains initiated by the E2 enzyme UBE2D1/UBCH5 in vitro; it is however unclear whether UBE2D1/UBCH5 acts as an E2 enzyme for the APC/C in vivo. Also involved in ubiquitination and subsequent degradation of VHL, resulting in an accumulation of HIF1A. In vitro able to promote polyubiquitination using all 7 ubiquitin Lys residues, except 'Lys-48'-linked polyubiquitination. This Homo sapiens (Human) protein is Ubiquitin-conjugating enzyme E2 S (UBE2S).